The chain runs to 599 residues: Beta-glucuronidase (599 aa).

D-glucuronate-binding residues include Asp160 and Asn407. The active-site Proton donor is Glu408. 5 residues coordinate D-glucuronate: Asn462, Tyr468, Glu501, Trp546, and Lys565. Catalysis depends on Glu501, which acts as the Nucleophile. The short motif at Asn563–Lys565 is the N-K motif element.

Belongs to the glycosyl hydrolase 2 family.

The enzyme catalyses a beta-D-glucuronoside + H2O = D-glucuronate + an alcohol. With respect to regulation, inhibited by a set of synthetic compounds like thio-urea derivatives and analogs. Inhibitors of gut microbial beta-glucuronidases are expected to block the reactivation of glucuronidated cancer drugs, and to alleviate drug-induced GI toxicity. Functionally, displays beta-glucuronidase activity with the artificial substrate p-nitrophenyl-beta-D-glucuronide (PNPG). Is likely capable of scavenging glucuronate from a range of chemically distinct xenobiotic and endobiotic glucuronides present in the gastrointestinal (GI) tract, to be able to utilize these diverse sources of carbon. As part of the GI microbiome, this enzyme would be able to reactivate glucuronide drug conjugates, such reactivated compounds can significantly damage the GI tract. This Streptococcus agalactiae serotype V (strain ATCC BAA-611 / 2603 V/R) protein is Beta-glucuronidase.